Consider the following 528-residue polypeptide: Sphingosine-1-phosphate lyase (528 aa).

A helical transmembrane segment spans residues 13–35; that stretch reads PAKLVLATAGITAASILAYQAIT. Lys-324 is modified (N6-(pyridoxal phosphate)lysine).

Belongs to the group II decarboxylase family. Sphingosine-1-phosphate lyase subfamily. It depends on pyridoxal 5'-phosphate as a cofactor.

Its subcellular location is the endoplasmic reticulum membrane. The catalysed reaction is sphinganine 1-phosphate = hexadecanal + phosphoethanolamine. It functions in the pathway lipid metabolism; sphingolipid metabolism. Cleaves phosphorylated sphingoid bases (PSBs), such as sphingosine-1-phosphate, into fatty aldehydes and phosphoethanolamine. Sphingosine-1-phosphate (S1P) probably acts intracellularly as a second messenger perhaps by promoting cell proliferation; the absence of S1P lyase increases its concentration. This leads to increased lateral pseudopod formation as well as defects in the efficiency of chemotaxis. Overexpression of S1P lyase causes decreased growth rates, entry into stationary phase at lower cell density and increased sensitivity to the antitumor agents cisplatin and carboplatin; these effects are more pronounced in cells that express more enzyme. This Dictyostelium discoideum (Social amoeba) protein is Sphingosine-1-phosphate lyase (sglA).